Consider the following 598-residue polypeptide: Nitrate/nitrite sensor protein NarX (598 aa).

Residues Met1–Gln14 are Cytoplasmic-facing. Residues Val15 to Val37 form a helical membrane-spanning segment. Residues Gln38 to Thr151 lie on the Periplasmic side of the membrane. Residues Val152–Leu174 form a helical membrane-spanning segment. Residues Arg175–Glu598 lie on the Cytoplasmic side of the membrane. Positions Ala176–Ala228 constitute an HAMP domain. The Histidine kinase domain maps to Thr393 to Lys587. Residue His399 is modified to Phosphohistidine; by autocatalysis.

Its subcellular location is the cell inner membrane. The catalysed reaction is ATP + protein L-histidine = ADP + protein N-phospho-L-histidine.. Acts as a sensor for nitrate/nitrite and transduces signal of nitrate availability to the NarL protein and of both nitrate/nitrite to the NarP protein. NarX probably activates NarL and NarP by phosphorylation in the presence of nitrate. NarX also plays a negative role in controlling NarL activity, probably through dephosphorylation in the absence of nitrate. The chain is Nitrate/nitrite sensor protein NarX (narX) from Escherichia coli O157:H7.